We begin with the raw amino-acid sequence, 352 residues long: Lipoyl synthase (352 aa).

The disordered stretch occupies residues 1–21 (MTSVDTPTPHGGTPAPAPATA). Residues cysteine 71, cysteine 76, cysteine 82, cysteine 97, cysteine 101, cysteine 104, and serine 308 each contribute to the [4Fe-4S] cluster site. Positions 83-297 (WEDREATFLI…SRVAEEIGFA (215 aa)) constitute a Radical SAM core domain.

Belongs to the radical SAM superfamily. Lipoyl synthase family. It depends on [4Fe-4S] cluster as a cofactor.

It is found in the cytoplasm. The enzyme catalyses [[Fe-S] cluster scaffold protein carrying a second [4Fe-4S](2+) cluster] + N(6)-octanoyl-L-lysyl-[protein] + 2 oxidized [2Fe-2S]-[ferredoxin] + 2 S-adenosyl-L-methionine + 4 H(+) = [[Fe-S] cluster scaffold protein] + N(6)-[(R)-dihydrolipoyl]-L-lysyl-[protein] + 4 Fe(3+) + 2 hydrogen sulfide + 2 5'-deoxyadenosine + 2 L-methionine + 2 reduced [2Fe-2S]-[ferredoxin]. The protein operates within protein modification; protein lipoylation via endogenous pathway; protein N(6)-(lipoyl)lysine from octanoyl-[acyl-carrier-protein]: step 2/2. Functionally, catalyzes the radical-mediated insertion of two sulfur atoms into the C-6 and C-8 positions of the octanoyl moiety bound to the lipoyl domains of lipoate-dependent enzymes, thereby converting the octanoylated domains into lipoylated derivatives. The sequence is that of Lipoyl synthase from Nocardia farcinica (strain IFM 10152).